The primary structure comprises 115 residues: MAIIPKNYARLESGYREKALKLFPWVCGRCSREFVYSNLRELTVHHIDHDHTNNPEDGSNWELLCLYCHDHEHSKYTEADQYGSTVIAGEDAQKDVGEATYNPFADLKAMMNKKK.

The 49-residue stretch at 27-75 folds into the HNH domain; it reads CGRCSREFVYSNLRELTVHHIDHDHTNNPEDGSNWELLCLYCHDHEHSK.

This sequence belongs to the HNH nuclease family.

This chain is Putative HNH nuclease YajD (yajD), found in Salmonella typhi.